The chain runs to 75 residues: Putative antitoxin PH1062.1 (75 aa).

Belongs to the UPF0330 family.

Its function is as follows. Possibly the antitoxin component of a type II toxin-antitoxin (TA) system. This is Putative antitoxin PH1062.1 from Pyrococcus horikoshii (strain ATCC 700860 / DSM 12428 / JCM 9974 / NBRC 100139 / OT-3).